The following is a 1040-amino-acid chain: Myoblast growth factor receptor egl-15 (1040 aa).

A signal peptide spans 1 to 19 (MSYFLASCLGVGLLSTVSC). Topologically, residues 20–525 (SLQGLTSHYR…PKIDRWTTSD (506 aa)) are extracellular. An Ig-like C2-type 1 domain is found at 33 to 125 (PRFKHVANER…GQISRNFTVE (93 aa)). Cys55 and Cys109 are joined by a disulfide. Residue Asn121 is glycosylated (N-linked (GlcNAc...) asparagine). A compositionally biased stretch (basic and acidic residues) spans 234–257 (VHDSEESPSESRTEFINADEKENK). The disordered stretch occupies residues 234 to 267 (VHDSEESPSESRTEFINADEKENKEDEEEDYSVS). N-linked (GlcNAc...) asparagine glycans are attached at residues Asn280 and Asn299. Ig-like C2-type domains follow at residues 287-383 (PYFK…FHVI) and 391-501 (PPII…ATLT). Residues Cys314 and Cys367 are joined by a disulfide bond. Residues Asn401, Asn407, Asn433, Asn440, Asn449, Asn474, and Asn497 are each glycosylated (N-linked (GlcNAc...) asparagine). Cys414 and Cys485 are oxidised to a cystine. Residues 526 to 549 (YIFTTILLFLLLAATLFGILFMVC) traverse the membrane as a helical segment. The Cytoplasmic segment spans residues 550-1040 (KQTLHKKGFM…NNNSMSKPEF (491 aa)). The 292-residue stretch at 640–931 (LSLVHMLGEG…KTIVDYLDWM (292 aa)) folds into the Protein kinase domain. ATP-binding positions include 646 to 654 (LGEGAFGEV) and Lys672. Catalysis depends on Asp797, which acts as the Proton acceptor. The residue at position 828 (Tyr828) is a Phosphotyrosine; by autocatalysis. Disordered stretches follow at residues 952–984 (ERST…LPSE) and 1021–1040 (TPET…KPEF). The segment covering 1022-1040 (PETSQRIPSNNNSMSKPEF) has biased composition (polar residues).

It belongs to the protein kinase superfamily. Tyr protein kinase family. Fibroblast growth factor receptor subfamily. The cofactor is Mg(2+). In terms of processing, activity is regulated by the phosphatase clr-1, however it is not known whether clr-1 acts directly on egl-15.

Its subcellular location is the membrane. The enzyme catalyses L-tyrosyl-[protein] + ATP = O-phospho-L-tyrosyl-[protein] + ADP + H(+). Functionally, receptor tyrosine kinase required for larval development. May phosphorylate adapter protein soc-1 which in turn may result in the recruitment and/or activation of phosphatase ptp-2. May activate the Ras/MAPK kinase signaling pathway which includes sem-5, sos-1, let-60/Ras, lin-45/Raf, mek-2 and mpk-1. Acts in the hypodermis to regulate axon growth and fluid homeostasis. Activates protein degradation in muscles. Probably following interaction with ligand let-756, negatively regulates membrane protrusion from body wall muscles during larval development. Plays a role in nicotinic acetylcholine receptor (nAChR)-mediated sensitivity to nicotine. Regulates synaptic levels of nAChR subunit lev-1 in the nerve cord. In terms of biological role, affects the maintenance of axon position without affecting axon growth. Interaction with egl-17 is required for the guidance of sex myoblast migration during gonad development. Its function is as follows. Interaction with let-756 appears to play a role in maintaining body morphology at higher temperatures. This chain is Myoblast growth factor receptor egl-15 (egl-15), found in Caenorhabditis elegans.